Here is a 282-residue protein sequence, read N- to C-terminus: Bifunctional protein FolD (282 aa).

Residue 163 to 165 (GRS) participates in NADP(+) binding.

It belongs to the tetrahydrofolate dehydrogenase/cyclohydrolase family. As to quaternary structure, homodimer.

The catalysed reaction is (6R)-5,10-methylene-5,6,7,8-tetrahydrofolate + NADP(+) = (6R)-5,10-methenyltetrahydrofolate + NADPH. The enzyme catalyses (6R)-5,10-methenyltetrahydrofolate + H2O = (6R)-10-formyltetrahydrofolate + H(+). Its pathway is one-carbon metabolism; tetrahydrofolate interconversion. Functionally, catalyzes the oxidation of 5,10-methylenetetrahydrofolate to 5,10-methenyltetrahydrofolate and then the hydrolysis of 5,10-methenyltetrahydrofolate to 10-formyltetrahydrofolate. This is Bifunctional protein FolD from Leuconostoc citreum (strain KM20).